Here is a 122-residue protein sequence, read N- to C-terminus: Small ribosomal subunit protein uS13 (122 aa).

The segment at 93–122 is disordered; the sequence is RRGLPVRGQRTKTNARTRKGPKKTIAGKKK.

The protein belongs to the universal ribosomal protein uS13 family. In terms of assembly, part of the 30S ribosomal subunit. Forms a loose heterodimer with protein S19. Forms two bridges to the 50S subunit in the 70S ribosome.

Functionally, located at the top of the head of the 30S subunit, it contacts several helices of the 16S rRNA. In the 70S ribosome it contacts the 23S rRNA (bridge B1a) and protein L5 of the 50S subunit (bridge B1b), connecting the 2 subunits; these bridges are implicated in subunit movement. Contacts the tRNAs in the A and P-sites. The polypeptide is Small ribosomal subunit protein uS13 (Corynebacterium efficiens (strain DSM 44549 / YS-314 / AJ 12310 / JCM 11189 / NBRC 100395)).